The primary structure comprises 865 residues: MEALGSSDCNLEILETLSDDAIQEITESYDGFFTTVESLIAGTGDSLVEDEFVSHVYCLCKYGLDSLVRDHFLRSLEQAFEKGGASSFWQHFDAYSEKKHHNYGEEIQIVLCKALEEISIEKQYHEKCLSIVVHALQSFKEQSSDDRQNSDTERVHLFSRFQSMLSSTLMTTLPQHFPEILHWYFKERLEELSAIMDGDGIEEQEDDCMDLDEKLRYKNGEMDVDEGCSQGKRLGHDKLVKNIGKVVRDLRSIGFTSMAENAYASAIFLLLKAKVHDLAGDDYRTSVLESIKEWIQTVPLQFLNALLSYLGDSVSYGTTSSGLTSPLACCPSPSFSRVVTPSEGIVRWKLRLEYFAYETLQDLRIAKLFEIIVDYPESSPAIEDLKQCLEYTGQHSKLVESFISSLKYRLLTAGASTNDILHQYVSTIKALRAIDPAGVFLEAVGEPIRDYLRGRKDTIKCIVTMLTDGSGGNANGSGNPGDSLLEELMRDEESQENVGFDDDFHTDDKQAWINASRWEPDPVEADPLKGSLSQRKVDILGMLVDIIGSKEQLVNEYRVMLAEKLLNKTDYDIDTEIRTVELLKIHFGEASMQRCEIMLNDLIDSKRVNTNIKKASQTGAELRENELSVDTLTSTILSTNFWPPIQDEPLELPGPVDKLLSDYANRYHEIKTPRKLLWKKNLGTVKLELQFEDRAMQFTVSPTHAAIIMQFQEKKSWTYKDLAEVIGIPIDALNRRVNFWISKGVLRESTGANSNSSVLTLVESITDSGKNEGEELLTGEEEGETSIASVEDQLRKEMTIYEKFIMGMLTNFGSMALERIHNTLKMFCVADPSYDKSLQQLQSFLSGLVSEEKLEFRDGMYLLKK.

This sequence belongs to the cullin family. In terms of assembly, the APC/C is composed of at least 10 subunits. Interacts with APC8, APC11, CDC27A and CDC27B. Highly expressed in immature flowers. Expressed in stems, leaves and flowers.

It localises to the nucleus. It participates in protein modification; protein ubiquitination. In terms of biological role, component of the anaphase promoting complex/cyclosome (APC/C), a cell cycle-regulated E3 ubiquitin-protein ligase complex that controls progression through mitosis and the G1 phase of the cell cycle. The APC/C complex controls several key steps in the cell cycle by mediating ubiquitination and subsequent degradation of target proteins such as cyclins. The APC/C complex is required for the female gametophyte development and is involved in several aspect of development by controlling cell division and cell elongation. Involved in the control of endoreduplication. The protein is Anaphase-promoting complex subunit 2 (APC2) of Arabidopsis thaliana (Mouse-ear cress).